The primary structure comprises 346 residues: Transcription termination factor 4, mitochondrial (346 aa).

The N-terminal 42 residues, 1 to 42 (MASLGRQVPEWHRLLALSWACLVRQTPHLREQKQMSPSLSCK), are a transit peptide targeting the mitochondrion. 5 MTERF repeats span residues 142–172 (FNAL…LGLG), 177–204 (KRVL…LREK), 209–239 (AQHI…YAYF), 245–270 (HLDI…YLER), and 290–318 (LRNI…VFKK). The dimerization with NSUN4 stretch occupies residues 310–327 (VEEFQVFKKLLDQEEEEE). The tract at residues 321-346 (DQEEEEESESHASEEEEEEEEEEELL) is disordered. A compositionally biased stretch (acidic residues) spans 322 to 346 (QEEEEESESHASEEEEEEEEEEELL).

This sequence belongs to the mTERF family. In terms of assembly, heterodimer with NSUN4; this interaction may be required for NSUN4 recruitment to the mitochondrial large ribosomal subunit. In terms of tissue distribution, widely expressed, with highest levels in liver, followed by testis, kidney and brain.

It is found in the mitochondrion. Its function is as follows. Regulator of mitochondrial ribosome biogenesis and translation. Binds to mitochondrial ribosomal RNAs 16S, 12S and 7S. Targets NSUN4 RNA methyltransferase to the mitochondrial large ribosomal subunit. This Mus musculus (Mouse) protein is Transcription termination factor 4, mitochondrial (Mterf4).